A 516-amino-acid chain; its full sequence is Oxysterol-binding protein-like protein 1 (516 aa).

Disordered stretches follow at residues 168–240 and 459–501; these read PLGK…SQKS and KQEI…EEGK. Over residues 178–187 the composition is skewed to polar residues; the sequence is SRTTSSQSVA. Ser182 carries the post-translational modification Phosphoserine. A compositionally biased stretch (basic residues) spans 197-206; sequence TSKKKSSKKN. Residues 218-238 are compositionally biased toward polar residues; that stretch reads DRSSTAPSTAESNNEHLSSSQ.

This sequence belongs to the OSBP family.

The protein localises to the endoplasmic reticulum. The sequence is that of Oxysterol-binding protein-like protein 1 (obp1) from Schizosaccharomyces pombe (strain 972 / ATCC 24843) (Fission yeast).